Consider the following 62-residue polypeptide: Photosystem II reaction center protein Z (62 aa).

2 helical membrane-spanning segments follow: residues 8–28 and 41–61; these read ALAA…FAYA and WVGS…NFFV.

The protein belongs to the PsbZ family. As to quaternary structure, PSII is composed of 1 copy each of membrane proteins PsbA, PsbB, PsbC, PsbD, PsbE, PsbF, PsbH, PsbI, PsbJ, PsbK, PsbL, PsbM, PsbT, PsbX, PsbY, PsbZ, Psb30/Ycf12, peripheral proteins PsbO, CyanoQ (PsbQ), PsbU, PsbV and a large number of cofactors. It forms dimeric complexes.

The protein localises to the cellular thylakoid membrane. May control the interaction of photosystem II (PSII) cores with the light-harvesting antenna, regulates electron flow through the 2 photosystem reaction centers. PSII is a light-driven water plastoquinone oxidoreductase, using light energy to abstract electrons from H(2)O, generating a proton gradient subsequently used for ATP formation. This chain is Photosystem II reaction center protein Z, found in Gloeothece citriformis (strain PCC 7424) (Cyanothece sp. (strain PCC 7424)).